We begin with the raw amino-acid sequence, 406 residues long: ATP synthase subunit a (406 aa).

Low complexity-rich tracts occupy residues 22–31 (AGEHGAPAPE) and 43–59 (DAAG…AEHG). The interval 22–76 (AGEHGAPAPEVATPAEGHGARDAAGAATDPHGAAAEHGAAAHEDPAQHGAAGAEA) is disordered. Transmembrane regions (helical) follow at residues 151–171 (KHVV…FAAV), 209–229 (FVPY…FGLV), 232–252 (AATA…TFLI), 278–298 (LWPL…TKPF), 304–324 (LFAN…LIFA), and 351–371 (VQAY…VAHH). Positions 375-406 (DEHEEHGHGAAATGGAHGSHGSHVAGASPGHG) are disordered. Positions 383-406 (GAAATGGAHGSHGSHVAGASPGHG) are enriched in low complexity.

The protein belongs to the ATPase A chain family. In terms of assembly, F-type ATPases have 2 components, CF(1) - the catalytic core - and CF(0) - the membrane proton channel. CF(1) has five subunits: alpha(3), beta(3), gamma(1), delta(1), epsilon(1). CF(0) has three main subunits: a(1), b(2) and c(9-12). The alpha and beta chains form an alternating ring which encloses part of the gamma chain. CF(1) is attached to CF(0) by a central stalk formed by the gamma and epsilon chains, while a peripheral stalk is formed by the delta and b chains.

The protein resides in the cell inner membrane. Its function is as follows. Key component of the proton channel; it plays a direct role in the translocation of protons across the membrane. The chain is ATP synthase subunit a from Anaeromyxobacter sp. (strain Fw109-5).